Reading from the N-terminus, the 87-residue chain is UPF0367 protein P9211_01391 (87 aa).

Belongs to the UPF0367 family.

The sequence is that of UPF0367 protein P9211_01391 from Prochlorococcus marinus (strain MIT 9211).